The primary structure comprises 334 residues: Probable aminoacyl tRNA synthase complex-interacting multifunctional protein 2 (334 aa).

One can recognise a GST C-terminal domain in the interval 280-327 (LDKRLQKQQYFGGSQMSVADVGVYSSLIRMPAVTEKDLTPALVAWRKR).

As to quaternary structure, component of the aminoacyl-tRNA synthase complex which is comprised of a bifunctional glutamyl-prolyl-tRNA synthase, the monospecific isoleucyl, leucyl, glutaminyl, methionyl, lysyl, arginyl and aspartyl-tRNA synthases, and three auxiliary proteins.

The protein localises to the cytoplasm. Its subcellular location is the cytosol. It localises to the nucleus. Functionally, required for assembly and stability of the aminoacyl-tRNA synthase complex. In Drosophila melanogaster (Fruit fly), this protein is Probable aminoacyl tRNA synthase complex-interacting multifunctional protein 2.